The primary structure comprises 138 residues: Single-stranded DNA-binding protein 4 (138 aa).

Residues 1-104 (MINNVVLIGR…VVADSFQILE (104 aa)) form the SSB domain. The segment at 107–138 (DNSTNQASMDDQLPPSFGNSQPMDISDDDLPF) is disordered. An Important for interaction with partner proteins motif is present at residues 133-138 (DDDLPF).

In terms of assembly, homotetramer.

Functionally, plays an important role in DNA replication, recombination and repair. Binds to ssDNA and to an array of partner proteins to recruit them to their sites of action during DNA metabolism. In Streptococcus agalactiae serotype V (strain ATCC BAA-611 / 2603 V/R), this protein is Single-stranded DNA-binding protein 4 (ssb4).